A 45-amino-acid chain; its full sequence is Bacteriocin fulvocin-C (45 aa).

Its function is as follows. Bacteriocin. This is Bacteriocin fulvocin-C from Myxococcus fulvus.